We begin with the raw amino-acid sequence, 274 residues long: DNA damage-inducible protein D (274 aa).

This Escherichia coli (strain K12) protein is DNA damage-inducible protein D (dinD).